The sequence spans 104 residues: ATP-dependent Clp protease adapter protein ClpS (104 aa).

This sequence belongs to the ClpS family. Binds to the N-terminal domain of the chaperone ClpA.

Functionally, involved in the modulation of the specificity of the ClpAP-mediated ATP-dependent protein degradation. This is ATP-dependent Clp protease adapter protein ClpS from Neisseria gonorrhoeae (strain ATCC 700825 / FA 1090).